A 217-amino-acid polypeptide reads, in one-letter code: Probable transaldolase (217 aa).

Catalysis depends on Lys83, which acts as the Schiff-base intermediate with substrate.

The protein belongs to the transaldolase family. Type 3B subfamily.

The protein resides in the cytoplasm. It catalyses the reaction D-sedoheptulose 7-phosphate + D-glyceraldehyde 3-phosphate = D-erythrose 4-phosphate + beta-D-fructose 6-phosphate. Its pathway is carbohydrate degradation; pentose phosphate pathway; D-glyceraldehyde 3-phosphate and beta-D-fructose 6-phosphate from D-ribose 5-phosphate and D-xylulose 5-phosphate (non-oxidative stage): step 2/3. Transaldolase is important for the balance of metabolites in the pentose-phosphate pathway. The chain is Probable transaldolase from Pseudothermotoga lettingae (strain ATCC BAA-301 / DSM 14385 / NBRC 107922 / TMO) (Thermotoga lettingae).